Reading from the N-terminus, the 199-residue chain is Charged multivesicular body protein 1B1 (199 aa).

Residues 10–48 (NLKFAAKELNRSSKKCDKEEKAEKAKIKKAIQKGNMEVA) are a coiled coil. The segment at 132–156 (MEDTMSSTTTLTTPQNQVDMLLQEM) is interaction with IST1. Positions 167 to 199 (ELPQGQTGSVGTSVASAEQDELSQRLARLRDQV) are disordered. A compositionally biased stretch (polar residues) spans 170–182 (QGQTGSVGTSVAS). The segment at 174-199 (GSVGTSVASAEQDELSQRLARLRDQV) is interaction with SPAST. Positions 178-199 (TSVASAEQDELSQRLARLRDQV) form a coiled coil. The interaction with VPS4A, MITD1 and STAMBP stretch occupies residues 180 to 196 (VASAEQDELSQRLARLR). Positions 180–199 (VASAEQDELSQRLARLRDQV) are interaction with VTA1. The segment at 183-199 (AEQDELSQRLARLRDQV) is interaction with VPS4B. The short motif at 186-196 (DELSQRLARLR) is the MIT-interacting motif element.

It belongs to the SNF7 family. In terms of assembly, probable peripherally associated component of the endosomal sorting required for transport complex III (ESCRT-III). ESCRT-III components are thought to multimerize to form a flat lattice on the perimeter membrane of the endosome. Several assembly forms of ESCRT-III may exist that interact and act sequentially. Interacts with CHMP1A. Interacts with VTA1; the interaction probably involves the open conformation of CHMP1B. Interacts with CHMP2A. Interacts with VPS4A; the interaction is direct. Interacts with VPS4B; the interaction is direct. Interacts with SPAST (via MIT domain); the interaction is direct. Interacts with IST1. Interacts with MITD1. Interacts with STAMBP.

The protein resides in the cytoplasm. It localises to the cytosol. It is found in the endosome. The protein localises to the late endosome membrane. Probable peripherally associated component of the endosomal sorting required for transport complex III (ESCRT-III) which is involved in multivesicular bodies (MVBs) formation and sorting of endosomal cargo proteins into MVBs. MVBs contain intraluminal vesicles (ILVs) that are generated by invagination and scission from the limiting membrane of the endosome and mostly are delivered to lysosomes enabling degradation of membrane proteins, such as stimulated growth factor receptors, lysosomal enzymes and lipids. The MVB pathway appears to require the sequential function of ESCRT-O, -I,-II and -III complexes. ESCRT-III proteins mostly dissociate from the invaginating membrane before the ILV is released. The ESCRT machinery also functions in topologically equivalent membrane fission events, such as the terminal stages of cytokinesis. ESCRT-III proteins are believed to mediate the necessary vesicle extrusion and/or membrane fission activities, possibly in conjunction with the AAA ATPase VPS4. Involved in cytokinesis. Involved in recruiting VPS4A and/or VPS4B and SPAST to the midbody of dividing cells. The chain is Charged multivesicular body protein 1B1 from Mus musculus (Mouse).